The sequence spans 66 residues: Large ribosomal subunit protein bL31 (66 aa).

Positions 16, 18, 36, and 39 each coordinate Zn(2+).

Belongs to the bacterial ribosomal protein bL31 family. Type A subfamily. In terms of assembly, part of the 50S ribosomal subunit. Requires Zn(2+) as cofactor.

In terms of biological role, binds the 23S rRNA. In Campylobacter curvus (strain 525.92), this protein is Large ribosomal subunit protein bL31.